A 274-amino-acid chain; its full sequence is Putative phosphoenolpyruvate synthase regulatory protein (274 aa).

157 to 164 (GVSRCGKT) is a binding site for ADP.

Belongs to the pyruvate, phosphate/water dikinase regulatory protein family. PSRP subfamily.

The catalysed reaction is [pyruvate, water dikinase] + ADP = [pyruvate, water dikinase]-phosphate + AMP + H(+). It carries out the reaction [pyruvate, water dikinase]-phosphate + phosphate + H(+) = [pyruvate, water dikinase] + diphosphate. Functionally, bifunctional serine/threonine kinase and phosphorylase involved in the regulation of the phosphoenolpyruvate synthase (PEPS) by catalyzing its phosphorylation/dephosphorylation. The protein is Putative phosphoenolpyruvate synthase regulatory protein of Bordetella avium (strain 197N).